The chain runs to 313 residues: Sideroflexin-4 (313 aa).

Helical transmembrane passes span 87 to 107 (AAFL…DTGI) and 141 to 161 (TLLG…PHLF). N6-acetyllysine is present on Lys173. The next 3 membrane-spanning stretches (helical) occupy residues 175–191 (TLPI…NVFA), 230–247 (AVLF…IHIF), and 269–289 (FFMM…IGQI).

Belongs to the sideroflexin family. In terms of tissue distribution, largely restricted to kidney, brain and heart.

The protein localises to the mitochondrion inner membrane. Functionally, mitochondrial amino-acid transporter. Does not act as a serine transporter: not able to mediate transport of serine into mitochondria. This is Sideroflexin-4 from Mus musculus (Mouse).